The following is a 586-amino-acid chain: Serine/threonine-protein kinase TDA1 (586 aa).

Positions 1–26 are disordered; sequence MTTASSSASQLQQRLPEEKPWPQLSG. The region spanning 39–351 is the Protein kinase domain; the sequence is VTNHNSLGDG…AKNLKQHPFI (313 aa). ATP is bound by residues 45 to 53 and K68; that span reads LGDGNFSVV. D180 serves as the catalytic Proton acceptor. The segment at 503–524 is disordered; the sequence is TTPESRSNFNTPKTLSRQGSST. T504 is subject to Phosphothreonine. A phosphoserine mark is found at S509 and S518. T538 carries the post-translational modification Phosphothreonine. A Phosphoserine modification is found at S578.

Belongs to the protein kinase superfamily. Ser/Thr protein kinase family. As to quaternary structure, interacts with RIM11.

The protein resides in the cytoplasm. Its subcellular location is the nucleus. It catalyses the reaction L-seryl-[protein] + ATP = O-phospho-L-seryl-[protein] + ADP + H(+). It carries out the reaction L-threonyl-[protein] + ATP = O-phospho-L-threonyl-[protein] + ADP + H(+). In terms of biological role, serine/threonine protein kinase shown to have protein phosphorylation activity in vitro. This is Serine/threonine-protein kinase TDA1 (TDA1) from Saccharomyces cerevisiae (strain ATCC 204508 / S288c) (Baker's yeast).